The following is a 254-amino-acid chain: 3-dehydroquinate dehydratase (254 aa).

Residues 47-49 (EFR) and Arg83 contribute to the 3-dehydroquinate site. The Proton donor/acceptor role is filled by His144. Lys171 (schiff-base intermediate with substrate) is an active-site residue. 3-dehydroquinate contacts are provided by Arg213, Ser232, and Gln236.

The protein belongs to the type-I 3-dehydroquinase family. As to quaternary structure, homodimer.

It catalyses the reaction 3-dehydroquinate = 3-dehydroshikimate + H2O. It functions in the pathway metabolic intermediate biosynthesis; chorismate biosynthesis; chorismate from D-erythrose 4-phosphate and phosphoenolpyruvate: step 3/7. In terms of biological role, involved in the third step of the chorismate pathway, which leads to the biosynthesis of aromatic amino acids. Catalyzes the cis-dehydration of 3-dehydroquinate (DHQ) and introduces the first double bond of the aromatic ring to yield 3-dehydroshikimate. The sequence is that of 3-dehydroquinate dehydratase from Neisseria meningitidis serogroup A / serotype 4A (strain DSM 15465 / Z2491).